Reading from the N-terminus, the 180-residue chain is Cell division protein SepF (180 aa).

The interval 14–81 is disordered; that stretch reads NSEDDEEFDN…SKITPISKSS (68 aa). Acidic residues predominate over residues 15 to 35; it reads SEDDEEFDNEDYYLDDEEEEE. Positions 57–68 are enriched in basic and acidic residues; it reads TRRDTTPKEKPV. A compositionally biased stretch (low complexity) spans 69–79; sequence KTTSKITPISK.

Belongs to the SepF family. As to quaternary structure, homodimer. Interacts with FtsZ.

Its subcellular location is the cytoplasm. Its function is as follows. Cell division protein that is part of the divisome complex and is recruited early to the Z-ring. Probably stimulates Z-ring formation, perhaps through the cross-linking of FtsZ protofilaments. Its function overlaps with FtsA. The protein is Cell division protein SepF of Agathobacter rectalis (strain ATCC 33656 / DSM 3377 / JCM 17463 / KCTC 5835 / VPI 0990) (Eubacterium rectale).